A 335-amino-acid polypeptide reads, in one-letter code: Putative hydrogenase expression/formation protein MJ0676 (335 aa).

It belongs to the HypE family.

The chain is Putative hydrogenase expression/formation protein MJ0676 from Methanocaldococcus jannaschii (strain ATCC 43067 / DSM 2661 / JAL-1 / JCM 10045 / NBRC 100440) (Methanococcus jannaschii).